Consider the following 826-residue polypeptide: Zinc phosphodiesterase ELAC protein 2 (826 aa).

The transit peptide at 1–16 directs the protein to the mitochondrion; the sequence is MWALCSLLRSATGRTM. The segment covering 15-27 has biased composition (polar residues); sequence TMSQGRTISQGSA. Disordered regions lie at residues 15–53 and 187–231; these read TMSQ…GSSG and SEQR…VSQR. A phosphoserine mark is found at Ser199, Ser208, Ser212, Ser229, Ser618, and Ser736. Over residues 208–224 the composition is skewed to basic and acidic residues; it reads SPERSSDSESNESEPHL. A disordered region spans residues 798–826; it reads ALTDDLEDGEPQQKRAHTEEPQSKKVRAQ. The segment covering 808-820 has biased composition (basic and acidic residues); that stretch reads PQQKRAHTEEPQS.

The protein belongs to the RNase Z family. As to quaternary structure, homodimer. Interacts with PTCD1. Requires Zn(2+) as cofactor.

Its subcellular location is the mitochondrion. The protein localises to the mitochondrion matrix. The protein resides in the mitochondrion nucleoid. It is found in the nucleus. It carries out the reaction Endonucleolytic cleavage of RNA, removing extra 3' nucleotides from tRNA precursor, generating 3' termini of tRNAs. A 3'-hydroxy group is left at the tRNA terminus and a 5'-phosphoryl group is left at the trailer molecule.. Its function is as follows. Zinc phosphodiesterase, which displays mitochondrial tRNA 3'-processing endonuclease activity. Involved in tRNA maturation, by removing a 3'-trailer from precursor tRNA. Associates with mitochondrial DNA complexes at the nucleoids to initiate RNA processing and ribosome assembly. The polypeptide is Zinc phosphodiesterase ELAC protein 2 (ELAC2) (Macaca fascicularis (Crab-eating macaque)).